A 181-amino-acid chain; its full sequence is Peptide deformylase (181 aa).

Residues Cys99 and His141 each contribute to the Fe cation site. The active site involves Glu142. Position 145 (His145) interacts with Fe cation.

Belongs to the polypeptide deformylase family. Fe(2+) serves as cofactor.

The catalysed reaction is N-terminal N-formyl-L-methionyl-[peptide] + H2O = N-terminal L-methionyl-[peptide] + formate. Removes the formyl group from the N-terminal Met of newly synthesized proteins. Requires at least a dipeptide for an efficient rate of reaction. N-terminal L-methionine is a prerequisite for activity but the enzyme has broad specificity at other positions. The chain is Peptide deformylase from Chlamydia trachomatis serovar A (strain ATCC VR-571B / DSM 19440 / HAR-13).